Here is a 95-residue protein sequence, read N- to C-terminus: Small ribosomal subunit protein bS6 (95 aa).

It belongs to the bacterial ribosomal protein bS6 family.

In terms of biological role, binds together with bS18 to 16S ribosomal RNA. The chain is Small ribosomal subunit protein bS6 from Symbiobacterium thermophilum (strain DSM 24528 / JCM 14929 / IAM 14863 / T).